Here is a 303-residue protein sequence, read N- to C-terminus: Indole-3-glycerol phosphate synthase (303 aa).

The protein belongs to the TrpC family.

It catalyses the reaction 1-(2-carboxyphenylamino)-1-deoxy-D-ribulose 5-phosphate + H(+) = (1S,2R)-1-C-(indol-3-yl)glycerol 3-phosphate + CO2 + H2O. Its pathway is amino-acid biosynthesis; L-tryptophan biosynthesis; L-tryptophan from chorismate: step 4/5. The sequence is that of Indole-3-glycerol phosphate synthase from Acaryochloris marina (strain MBIC 11017).